Reading from the N-terminus, the 334-residue chain is Amino acid--[acyl-carrier-protein] ligase 2 (334 aa).

C131 provides a ligand contact to Zn(2+). Residues R159, E161, and R168–L169 contribute to the ATP site. Position 176 (E176) interacts with Zn(2+). An an L-alpha-amino acid-binding site is contributed by E176. Residues K235 and A250 to S253 contribute to the ATP site. C279 provides a ligand contact to Zn(2+). R286 contributes to the ATP binding site.

This sequence belongs to the class-II aminoacyl-tRNA synthetase family. Amino acid--[acyl-carrier-protein] ligase subfamily. As to quaternary structure, homodimer. It depends on Zn(2+) as a cofactor.

The enzyme catalyses an L-alpha-amino acid + holo-[ACP] + ATP = an L-alpha-aminoacyl-[ACP] + AMP + diphosphate. In terms of biological role, catalyzes the ATP-dependent activation of L-glycine and its transfer to the phosphopantetheine prosthetic group covalently attached to the vicinal carrier protein blr6284 of yet unknown function. May participate in nonribosomal peptide synthesis or related processes. L-alanine is a poor substrate whereas L-serine or D-amino acids are not substrates for ATP-dependent activation. Does not display tRNA aminoacylation activity. The polypeptide is Amino acid--[acyl-carrier-protein] ligase 2 (Bradyrhizobium diazoefficiens (strain JCM 10833 / BCRC 13528 / IAM 13628 / NBRC 14792 / USDA 110)).